We begin with the raw amino-acid sequence, 131 residues long: Type-5 thionin (131 aa).

The signal sequence occupies residues 1–29; it reads MGGGQKGLESAIVCLLVLGLVLEQVQVEG. The propeptide at 67–131 is acidic domain; that stretch reads LASVRSSDEP…GDTLLASLDD (65 aa).

It belongs to the plant thionin (TC 1.C.44) family. In terms of processing, is disulfide-linked. In terms of tissue distribution, developing endosperm.

The protein localises to the secreted. In terms of biological role, thionins are small plant proteins which are toxic to animal cells. They seem to exert their toxic effect at the level of the cell membrane. Their precise function is not known. The sequence is that of Type-5 thionin (TTHV) from Triticum aestivum (Wheat).